The following is a 977-amino-acid chain: GAS2-like protein pickled eggs (977 aa).

The region spanning 20–159 (EAMREDLAEW…CLLEVARRGA (140 aa)) is the Calponin-homology (CH) domain. Residues 218 to 245 (VETDLYDDSDDSETEDDGDQNPVLMYGP) form a disordered region. Residues 221–236 (DLYDDSDDSETEDDGD) are compositionally biased toward acidic residues. The 73-residue stretch at 252-324 (NDLKSLDEMV…HYLDKHDPCR (73 aa)) folds into the GAR domain. 5 disordered regions span residues 397–543 (PTLQ…SEIS), 557–624 (AQKR…VCDG), 666–685 (VANT…RSPL), 693–803 (IDNS…KGRS), and 910–977 (NLER…TELY). Composition is skewed to polar residues over residues 399 to 428 (LQNG…NQQA) and 436 to 454 (ATGS…QLLG). A compositionally biased stretch (gly residues) spans 502–527 (GGSGVGSAAGGVSSGSAGSGVAGEQG). Residues 577–589 (RLDQTSSDSQISP) are compositionally biased toward polar residues. Over residues 601-620 (ILEEEDLNGQDREEDQEDYS) the composition is skewed to acidic residues. Composition is skewed to polar residues over residues 666-677 (VANTMGNPTPNL) and 731-741 (TRNSTGATTTP). A compositionally biased stretch (low complexity) spans 928 to 953 (SSAASSCESNNSNAGAGSGAAAGSAS).

Belongs to the GAS2 family. Expressed in the ovary and the ring canals of the germline cells. In larvae, expressed in the notal region of the wing disk.

The protein localises to the cytoplasm. It localises to the cytoskeleton. It is found in the cell cortex. In terms of biological role, essential for development and viability. Required for ovary development and oogenesis, and is essential for the development of the indirect flight muscles. May act as a negative regulator of the Notch signaling pathway in certain tissues, such as the muscle precursors and ovaries. May function as a linker protein between the actin and microtubule cytoskeletons. The sequence is that of GAS2-like protein pickled eggs from Drosophila melanogaster (Fruit fly).